Consider the following 107-residue polypeptide: Late embryogenesis abundant protein M10 (107 aa).

The N-terminal stretch at 1-19 is a signal peptide; sequence MGNLMSLVLVALLFSLSLA.

Its function is as follows. May be involved in the acquisition of desiccation tolerance during late phase of embryogenesis. The protein is Late embryogenesis abundant protein M10 of Arabidopsis thaliana (Mouse-ear cress).